A 210-amino-acid chain; its full sequence is Na(+)-translocating NADH-quinone reductase subunit D (210 aa).

The next 6 helical transmembrane spans lie at 14 to 34 (PIIN…ALAV), 42 to 62 (LVMS…ISLI), 72 to 92 (IIVQ…VLQA), 96 to 116 (EIAK…IVMG), 131 to 151 (FMDG…VGFF), and 178 to 198 (NGLL…IWVI).

The protein belongs to the NqrDE/RnfAE family. As to quaternary structure, composed of six subunits; NqrA, NqrB, NqrC, NqrD, NqrE and NqrF.

It is found in the cell inner membrane. It catalyses the reaction a ubiquinone + n Na(+)(in) + NADH + H(+) = a ubiquinol + n Na(+)(out) + NAD(+). Its function is as follows. NQR complex catalyzes the reduction of ubiquinone-1 to ubiquinol by two successive reactions, coupled with the transport of Na(+) ions from the cytoplasm to the periplasm. NqrA to NqrE are probably involved in the second step, the conversion of ubisemiquinone to ubiquinol. The chain is Na(+)-translocating NADH-quinone reductase subunit D from Shewanella denitrificans (strain OS217 / ATCC BAA-1090 / DSM 15013).